The sequence spans 666 residues: NADH-ubiquinone oxidoreductase chain 5 (666 aa).

17 helical membrane passes run 3-23 (LLILFLPLLGSLISGFGGRWL), 31-51 (FSTLCVVVSSLFSLLAFFEIG), 59-78 (IFLVSWIKSGAFYVSWGFLF), 82-101 (TVTMLVVITLVSSLVHIYSI), 119-139 (IFTFFMLILVTADNLIQMFLG), 168-190 (LIVNRVGDFGLSLGIFLIFWVFN), 211-231 (FLGFKLHVLTLISLFLFIGAI), 251-271 (TPVSALIHAATMVTAGVFLMI), 283-303 (ILFILITFGSLTAFFAAVTGV), 311-333 (VIAYSTCSQLGYMIFSCGMSCYD), 337-357 (FHLANHAFFKALLFLSAGSVI), 375-395 (FMPLTYSVMLIGTLALIGFPF), 421-441 (YISFACWLGTMSVFFTSFYSF), 467-487 (LLMIFPLIILSIGSIFAGYLI), 524-544 (WLPFILSLLGIFFASFVQIFL), 572-594 (VLYNRLIVLPILNFGYSISFKIL), and 629-649 (YLFFMIFTFCSFSIILVYSYI).

It belongs to the complex I subunit 5 family.

The protein localises to the mitochondrion inner membrane. The enzyme catalyses a ubiquinone + NADH + 5 H(+)(in) = a ubiquinol + NAD(+) + 4 H(+)(out). Core subunit of the mitochondrial membrane respiratory chain NADH dehydrogenase (Complex I) that is believed to belong to the minimal assembly required for catalysis. Complex I functions in the transfer of electrons from NADH to the respiratory chain. The immediate electron acceptor for the enzyme is believed to be ubiquinone. The sequence is that of NADH-ubiquinone oxidoreductase chain 5 (ND5) from Chondrus crispus (Carrageen Irish moss).